Reading from the N-terminus, the 320-residue chain is Malate dehydrogenase (320 aa).

NAD(+)-binding positions include 10–15 and Asp34; that span reads GSGMIG. 2 residues coordinate substrate: Arg83 and Arg89. NAD(+)-binding positions include Asn96 and 119–121; that span reads ITN. Substrate contacts are provided by Asn121 and Arg152. The active-site Proton acceptor is the His176.

The protein belongs to the LDH/MDH superfamily. MDH type 3 family.

It catalyses the reaction (S)-malate + NAD(+) = oxaloacetate + NADH + H(+). Functionally, catalyzes the reversible oxidation of malate to oxaloacetate. The sequence is that of Malate dehydrogenase from Brucella abortus (strain S19).